The chain runs to 384 residues: BarH-like 2 homeobox protein (384 aa).

Disordered stretches follow at residues 1 to 134, 154 to 237, and 364 to 384; these read MTAM…APRT, CAPY…TAFS, and PGGQPALNPLSNPIPGTPHPR. Positions 119-134 are enriched in low complexity; it reads QSAAQQLGSAAAAPRT. Basic and acidic residues predominate over residues 177-217; the sequence is ESFRPKLEQEDSKTKLDKREDSQSDIKCHGTKEEGDREITS. Residues 229–288 constitute a DNA-binding region (homeobox); that stretch reads PRKARTAFSDHQLNQLERSFERQKYLSVQDRMDLAAALNLTDTQVKTWYQNRRTKWKRQT.

Belongs to the BAR homeobox family. Expressed in the ganglion cell layer of the retina in the eye and in the ventral zone of the dorsal thalamus of the CNS.

The protein resides in the nucleus. Potential regulator of neural basic helix-loop-helix genes. It may down-regulate expression of ASCL1 and, within the thalamus, up-regulate NGN2, thereby regulating distinct patterns of neuronal differentiation. This Rattus norvegicus (Rat) protein is BarH-like 2 homeobox protein (Barhl2).